A 1488-amino-acid polypeptide reads, in one-letter code: MIERGKFRSLTLINWNGFFARTFDLDELVTTLSGGNGAGKSTTMAAFVTALIPDLTLLHFRNTTEAGATSGSRDKGLHGKLKAGVCYSMLDTINSRHQRVVVGVRLQQVAGRDRKVDIKPFAIQGLPMSVQPTQLVTETLNERQARVLSLAELKDKLDEMEGVQFKQFNSITDYHSLMFDLGIIARRLRSASDRSKFYRLIEASLYGGISSAITRSLRDYLLPENSGVRKAFQDMEAALRENRLTLEAIRVTQSDRDLFKHLISEATDYVAADYMRHANERRVHLDQALAFRRDLYTSRKQLAAEQYKHVDMARELGEHNGAEGSLEADYQAASDHLNLVQTALRQQEKIERYEADLEELQIRLEEQNEVVAEAAEMQDENEARAEAAELEVDELKSQLADYQQALDVQQTRAIQYNQAISALARAKELCHLPDLTPESAAEWLDTFQAKEQEATEKLLSLEQKMSVAQTAHSQFEQAYQLVAAINGPLARSEAWDVARELLRDGVNQRHLAEQVQPLRMRLSELEQRLREQQEAERLLAEFCKRQGKNFDIDELEALHQELEARIASLSESVSSASEQRMALRQEQEQLQSRIQHLMQRAPVWLAAQNSLNQLSEQCGEEFTSSQEVTEYLQQLLEREREAIVERDEVGARKNAVDEEIERLSQPGGAEDQRLNALAERFGGVLLSEIYDDVSLEDAPYFSALYGPSRHAIVVPDLSQIAEQLEGLTDCPEDLYLIEGDPQSFDDSVFSVDELEKAVVVKIADRQWRYSRFPSLPIFGRAARENRIESLHAEREVLSERFATLSFDVQKTQRLHQAFSRFIGSHLSVAFEDDPEAEIRRLNGRRVELERALATHESDNQQQRLQFEQAKEGVSALNRLLPRLNLLADETLADRVDEIQERLDEAQEAARFVQQYGNQLAKLEPVVSVLQSDPEQFEQLKEDYAWSQQMQRDARQQAFALAEVVERRAHFSYSDSAEMLSGNSDLNEKLRQRLEQAEAERTRAREALRSHAAQLSQYSQVLASLKSSYDTKKELLNDLQRELQDIGVRADSGAEERARQRRDELHAQLSNNRSRRNQLEKALTFCEAEMENLTRKLRKLERDYHEMREQVVTAKAGWCAVMRMVKDNGVERRLHRRELAYLSADELRSMSDKALGALRLAVADNEHLRDVLRLSEDPKRPERKIQFFVAVYQHLRERIRQDIIRTDDPVEAIEQMEIELSRLTEELTSREQKLAISSRSVANIIRKTIQREQNRIRMLNQGLQSVSFGQVNSVRLNVNVRETHATLLDVLSEQQEQHQDLFNSNRLTFSEALAKLYQRLNPQIDMGQRTPQTIGEELLDYRNYLEMEVEVNRGSDGWLRAESGALSTGEAIGTGMSILVMVVQSWEDEARRLRGKDISPCRLLFLDEAARLDARSIATLFELCERLQMQLIIAAPENISPEKGTTYKLVRKVFQNTEHVHVVGLRGFAPQLPETLPGTQTEDTPSEAS.

34-41 contributes to the ATP binding site; sequence GGNGAGKS. Coiled-coil stretches lie at residues 326–418, 444–472, and 509–602; these read LEAD…QYNQ, LDTF…QTAH, and RHLA…QRAP. The segment at 666 to 783 is flexible hinge; the sequence is PGGAEDQRLN…SLPIFGRAAR (118 aa). Coiled coils occupy residues 835 to 923, 977 to 1116, and 1209 to 1265; these read EAEI…AKLE, EMLS…AKAG, and VEAI…LQSV. A disordered region spans residues 1049–1074; it reads ADSGAEERARQRRDELHAQLSNNRSR. Basic and acidic residues predominate over residues 1051 to 1065; sequence SGAEERARQRRDELH.

Belongs to the SMC family. MukB subfamily. As to quaternary structure, homodimerization via its hinge domain. Binds to DNA via its C-terminal region. Interacts, and probably forms a ternary complex, with MukE and MukF via its C-terminal region. The complex formation is stimulated by calcium or magnesium. Interacts with tubulin-related protein FtsZ.

It is found in the cytoplasm. The protein resides in the nucleoid. Functionally, plays a central role in chromosome condensation, segregation and cell cycle progression. Functions as a homodimer, which is essential for chromosome partition. Involved in negative DNA supercoiling in vivo, and by this means organize and compact chromosomes. May achieve or facilitate chromosome segregation by condensation DNA from both sides of a centrally located replisome during cell division. In Salmonella typhimurium (strain LT2 / SGSC1412 / ATCC 700720), this protein is Chromosome partition protein MukB.